We begin with the raw amino-acid sequence, 428 residues long: Glucose-1-phosphate adenylyltransferase (428 aa).

Alpha-D-glucose 1-phosphate-binding positions include Tyr114, Gly179, 194–195 (EK), and Ser212.

Belongs to the bacterial/plant glucose-1-phosphate adenylyltransferase family. In terms of assembly, homotetramer.

The enzyme catalyses alpha-D-glucose 1-phosphate + ATP + H(+) = ADP-alpha-D-glucose + diphosphate. It functions in the pathway glycan biosynthesis; glycogen biosynthesis. Its function is as follows. Involved in the biosynthesis of ADP-glucose, a building block required for the elongation reactions to produce glycogen. Catalyzes the reaction between ATP and alpha-D-glucose 1-phosphate (G1P) to produce pyrophosphate and ADP-Glc. This Yersinia pseudotuberculosis serotype O:1b (strain IP 31758) protein is Glucose-1-phosphate adenylyltransferase.